A 406-amino-acid polypeptide reads, in one-letter code: Lysine-specific demethylase 8 (406 aa).

Basic and acidic residues predominate over residues 143–152; the sequence is KAERSEEPFS. The tract at residues 143 to 162 is disordered; it reads KAERSEEPFSKKRKHDCKSE. Residues 270-406 enclose the JmjC domain; that stretch reads DQVPELKEDI…LSFSVSFWWS (137 aa). Residues His311 and Asp313 each coordinate Fe cation.

Fe(2+) is required as a cofactor.

The protein resides in the nucleus. The enzyme catalyses N(6),N(6)-dimethyl-L-lysyl(36)-[histone H3] + 2 2-oxoglutarate + 2 O2 = L-lysyl(36)-[histone H3] + 2 formaldehyde + 2 succinate + 2 CO2. Its function is as follows. Histone demethylase required for G2/M phase cell cycle progression. Specifically demethylates dimethylated 'Lys-36' (H3K36me2) of histone H3, an epigenetic repressive mark, thereby acting as a transcription activator. May play a role in the regulation of the circadian clock. This Danio rerio (Zebrafish) protein is Lysine-specific demethylase 8 (kdm8).